The sequence spans 395 residues: Chorismate synthase (395 aa).

NADP(+) contacts are provided by arginine 40 and arginine 46. Residues 98–120 (LPREGRNAPLSRPRPGHADLTGM) are disordered. FMN-binding positions include 134 to 136 (RSS), 256 to 257 (QA), glycine 301, 316 to 320 (KPIPS), and arginine 342.

Belongs to the chorismate synthase family. Homotetramer. It depends on FMNH2 as a cofactor.

The enzyme catalyses 5-O-(1-carboxyvinyl)-3-phosphoshikimate = chorismate + phosphate. It functions in the pathway metabolic intermediate biosynthesis; chorismate biosynthesis; chorismate from D-erythrose 4-phosphate and phosphoenolpyruvate: step 7/7. In terms of biological role, catalyzes the anti-1,4-elimination of the C-3 phosphate and the C-6 proR hydrogen from 5-enolpyruvylshikimate-3-phosphate (EPSP) to yield chorismate, which is the branch point compound that serves as the starting substrate for the three terminal pathways of aromatic amino acid biosynthesis. This reaction introduces a second double bond into the aromatic ring system. The protein is Chorismate synthase of Bifidobacterium longum subsp. infantis (strain ATCC 15697 / DSM 20088 / JCM 1222 / NCTC 11817 / S12).